Consider the following 92-residue polypeptide: N(2)-fixation sustaining protein CowN (92 aa).

The protein belongs to the CowN family.

Its function is as follows. Is required to sustain N(2)-dependent growth in the presence of low levels of carbon monoxide (CO). Probably acts by protecting the N(2) fixation ability of the nitrogenase complex, which is inactivated in the presence of CO. The sequence is that of N(2)-fixation sustaining protein CowN from Rhodopseudomonas palustris (strain BisB18).